A 61-amino-acid polypeptide reads, in one-letter code: Small ribosomal subunit protein uS14 (61 aa).

Residues Cys-24, Cys-27, Cys-40, and Cys-43 each contribute to the Zn(2+) site.

This sequence belongs to the universal ribosomal protein uS14 family. Zinc-binding uS14 subfamily. In terms of assembly, part of the 30S ribosomal subunit. Contacts proteins S3 and S10. Requires Zn(2+) as cofactor.

Its function is as follows. Binds 16S rRNA, required for the assembly of 30S particles and may also be responsible for determining the conformation of the 16S rRNA at the A site. In Fervidobacterium nodosum (strain ATCC 35602 / DSM 5306 / Rt17-B1), this protein is Small ribosomal subunit protein uS14.